The primary structure comprises 68 residues: Protein SlyX homolog (68 aa).

Belongs to the SlyX family.

The polypeptide is Protein SlyX homolog (Brucella anthropi (strain ATCC 49188 / DSM 6882 / CCUG 24695 / JCM 21032 / LMG 3331 / NBRC 15819 / NCTC 12168 / Alc 37) (Ochrobactrum anthropi)).